A 284-amino-acid polypeptide reads, in one-letter code: Putative ABC transporter ATP-binding protein PH1815 (284 aa).

Residues 4-244 form the ABC transporter domain; the sequence is IEVEDVSFRY…VEFLRTIGVK (241 aa). 38 to 45 lines the ATP pocket; that stretch reads GPSGSGKS.

Belongs to the ABC transporter superfamily.

Its subcellular location is the cell membrane. Probably part of an ABC transporter complex. Responsible for energy coupling to the transport system. In Pyrococcus horikoshii (strain ATCC 700860 / DSM 12428 / JCM 9974 / NBRC 100139 / OT-3), this protein is Putative ABC transporter ATP-binding protein PH1815.